Reading from the N-terminus, the 84-residue chain is Small ribosomal subunit protein bS20 (84 aa).

The protein belongs to the bacterial ribosomal protein bS20 family.

Binds directly to 16S ribosomal RNA. In Lacticaseibacillus casei (strain BL23) (Lactobacillus casei), this protein is Small ribosomal subunit protein bS20.